Here is a 52-residue protein sequence, read N- to C-terminus: Rubredoxin (52 aa).

At M1 the chain carries N-formylmethionine; partial. The Rubredoxin-like domain maps to 1–52 (MKKYGCLVCGYVYDPAKGDPDHGIAPGTAFEDLPADWVCPLCGVSKDEFEPL). Residues C6, C9, C39, and C42 each contribute to the Fe cation site.

This sequence belongs to the rubredoxin family. Requires Fe(3+) as cofactor. Post-translationally, observed in four forms, with and without iron, and with and without formylation at Met-1.

In terms of biological role, rubredoxin is a small nonheme, iron protein lacking acid-labile sulfide. Its single Fe, chelated to 4 Cys, functions as an electron acceptor and may also stabilize the conformation of the molecule. The polypeptide is Rubredoxin (Heliobacterium mobile (Heliobacillus mobilis)).